Reading from the N-terminus, the 64-residue chain is Small ribosomal subunit protein bS18c (64 aa).

This sequence belongs to the bacterial ribosomal protein bS18 family. As to quaternary structure, part of the 30S ribosomal subunit.

It localises to the plastid. It is found in the chloroplast. The protein is Small ribosomal subunit protein bS18c (rps18) of Bigelowiella natans (Pedinomonas minutissima).